The primary structure comprises 273 residues: Putative phosphoenolpyruvate synthase regulatory protein (273 aa).

ADP is bound at residue 154–161 (GVSRSGKT).

It belongs to the pyruvate, phosphate/water dikinase regulatory protein family. PSRP subfamily.

It catalyses the reaction [pyruvate, water dikinase] + ADP = [pyruvate, water dikinase]-phosphate + AMP + H(+). It carries out the reaction [pyruvate, water dikinase]-phosphate + phosphate + H(+) = [pyruvate, water dikinase] + diphosphate. Its function is as follows. Bifunctional serine/threonine kinase and phosphorylase involved in the regulation of the phosphoenolpyruvate synthase (PEPS) by catalyzing its phosphorylation/dephosphorylation. The protein is Putative phosphoenolpyruvate synthase regulatory protein of Neisseria meningitidis serogroup B (strain ATCC BAA-335 / MC58).